The primary structure comprises 433 residues: WD repeat domain phosphoinositide-interacting protein 1 (433 aa).

Positions 127 to 132 match the Nuclear receptor interaction motif; that stretch reads LLKTLL. WD repeat units follow at residues 136-177 and 180-220; these read RNPH…CECT and AHDS…KLYE. The short motif at 221–224 is the L/FRRG motif element; that stretch reads FRRG. 2 WD repeats span residues 226–265 and 296–346; these read KRYVNISSLVFSMDSQFLCASSNTETVHVFKLEQLPERSE and DRAF…GGEC.

Belongs to the WD repeat PROPPIN family.

It is found in the golgi apparatus. It localises to the trans-Golgi network. The protein localises to the endosome. The protein resides in the cytoplasmic vesicle. Its subcellular location is the clathrin-coated vesicle. It is found in the preautophagosomal structure membrane. It localises to the cytoplasm. The protein localises to the cytoskeleton. Functionally, component of the autophagy machinery that controls the major intracellular degradation process by which cytoplasmic materials are packaged into autophagosomes and delivered to lysosomes for degradation. Plays an important role in starvation- and calcium-mediated autophagy, as well as in mitophagy. Functions downstream of the ulk1 and PI3-kinases that produce phosphatidylinositol 3-phosphate (PtdIns3P) on membranes of the endoplasmic reticulum once activated. Binds phosphatidylinositol 3-phosphate (PtdIns3P), and maybe other phosphoinositides including PtdIns3,5P2 and PtdIns5P, and is recruited to phagophore assembly sites at the endoplasmic reticulum membranes. There, it assists wipi2 in the recruitment of atg12-atg5-atg16l1, a complex that directly controls the elongation of the nascent autophagosomal membrane. Together with wdr45/wipi4, promotes atg2 (atg2a or atg2b)-mediated lipid transfer by enhancing atg2-association with phosphatidylinositol 3-monophosphate (PI3P)-containing membranes. This chain is WD repeat domain phosphoinositide-interacting protein 1 (wipi1), found in Xenopus laevis (African clawed frog).